The sequence spans 209 residues: Guanylate kinase (209 aa).

The Guanylate kinase-like domain maps to 9 to 188 (GIMLVISSPS…SVHQIKCIFT (180 aa)). 16–23 (SPSGGGKT) provides a ligand contact to ATP.

The protein belongs to the guanylate kinase family.

The protein resides in the cytoplasm. It carries out the reaction GMP + ATP = GDP + ADP. Its function is as follows. Essential for recycling GMP and indirectly, cGMP. The chain is Guanylate kinase from Ehrlichia canis (strain Jake).